A 288-amino-acid chain; its full sequence is Mortality factor 4-like protein 2 (288 aa).

A compositionally biased stretch (polar residues) spans 1–15 (MSSRKQGSQPRGQQS). The segment at 1-113 (MSSRKQGSQP…RADPTVESEE (113 aa)) is disordered. At Ser71 the chain carries Phosphoserine. The MRG domain occupies 117 to 288 (NRMEVKVKIP…ASAEYHRKAL (172 aa)).

Component of the NuA4 histone acetyltransferase complex which contains the catalytic subunit KAT5/TIP60 and the subunits EP400, TRRAP/PAF400, BRD8/SMAP, EPC1, DMAP1/DNMAP1, RUVBL1/TIP49, RUVBL2, ING3, actin, ACTL6A/BAF53A, MORF4L1/MRG15, MORF4L2/MRGX, MRGBP, YEATS4/GAS41 and VPS72/YL1. The NuA4 complex interacts with MYC and the adenovirus E1A protein. MORF4L1 may also participate in the formation of NuA4 related complexes which lack the KAT5/TIP60 catalytic subunit, but which include the SWI/SNF related protein SRCAP. Component of the MSIN3A histone deacetylase complex, which includes SIN3A, HDAC2, ARID4B, MORF4L1, RBBP4/RbAp48, and RBBP7/RbAp46. Interacts with MRFAP1 and RB1. May also interact with one or more as yet undefined members of the TLE (transducin-like enhancer of split) family of transcriptional repressors.

The protein localises to the nucleus. Functionally, component of the NuA4 histone acetyltransferase complex which is involved in transcriptional activation of select genes principally by acetylation of nucleosomal histone H4 and H2A. This modification may both alter nucleosome - DNA interactions and promote interaction of the modified histones with other proteins which positively regulate transcription. This complex may be required for the activation of transcriptional programs associated with oncogene and proto-oncogene mediated growth induction, tumor suppressor mediated growth arrest and replicative senescence, apoptosis, and DNA repair. The NuA4 complex ATPase and helicase activities seem to be, at least in part, contributed by the association of RUVBL1 and RUVBL2 with EP400. NuA4 may also play a direct role in DNA repair when directly recruited to sites of DNA damage. Also a component of the MSIN3A complex which acts to repress transcription by deacetylation of nucleosomal histones. The sequence is that of Mortality factor 4-like protein 2 (MORF4L2) from Macaca fascicularis (Crab-eating macaque).